The primary structure comprises 639 residues: MHMLSFIGALALPVFVCAQSCEPASLSPRLAGVDLEKFRLTPNAEYVDSDQQIPISTTNVGLIEQSYVETAIKLVRETFPTASFRLREDHYVGDNGVAHVHFRQTVHDLDVDNGDFNVNVGRDGSVFSYGNSFYTGPVPSITQLTKRDFTDPVAALKFALTHLQLPITAGDVSAESTEHPHKYILRGTSGAVTDPKARLVYLVKPEGTLCLVWRVETDVDDNWLLTYVDAKTAEDIHGVVDYISEATFQVYGWGINDPGQVDSRAVLTDPWNLKESPLTWFSDGQKNWTTTRGNNGIAQENINNLPTYLNNFRPDSPTQNFSYEYPAGGSPKDYINASITQLFYTANAYHDLLYTLGFNEKAGNFQWNNSGLGGKDKDYVILNAQDGASRNNADFATPPDGSPARMRMYLFTHTTPPRDGVFESGIVIHEYTHGLSMRLTGGPDNSRCLSAFESASMGEGWGDFMATAIRLKPSDTRATDYGMGMWVYNDEKGIRQYLYSTSMETNPLNYTSLNRMWEAHAGGTVWASMLYEVLWNLIDKHGKNDGPRPTFDERGVPRDGKYLAMKIVIDAMALQPCNPDFVQARNAILDADQALTGGQNKCEIWTGFAKRGLGQGAEYGRGRRVGSYDIPSGVCQKKI.

The N-terminal stretch at 1–16 (MHMLSFIGALALPVFV) is a signal peptide. A propeptide spanning residues 17–245 (CAQSCEPASL…IHGVVDYISE (229 aa)) is cleaved from the precursor. Asn-287, Asn-320, Asn-336, and Asn-368 each carry an N-linked (GlcNAc...) asparagine glycan. His-429 contacts Zn(2+). Glu-430 is an active-site residue. Position 433 (His-433) interacts with Zn(2+). N-linked (GlcNAc...) asparagine glycosylation is present at Asn-509.

Belongs to the peptidase M36 family. Zn(2+) serves as cofactor.

Its subcellular location is the secreted. In terms of biological role, secreted metalloproteinase that allows assimilation of proteinaceous substrates. The sequence is that of Extracellular metalloproteinase mep (mep) from Aspergillus flavus (strain ATCC 200026 / FGSC A1120 / IAM 13836 / NRRL 3357 / JCM 12722 / SRRC 167).